A 480-amino-acid chain; its full sequence is Zinc finger protein ztf-16 (480 aa).

Residues 5-27 form a C2H2-type 1 zinc finger; it reads NACTECGFTTTVFSEFQGHIEKH. The disordered stretch occupies residues 25–75; that stretch reads EKHENEHSRSSSGEMSNSQTIEWGDGIQSSTPSPRSTPPSDPTPSPDSDEH. The span at 34-45 shows a compositional bias: polar residues; that stretch reads SSSGEMSNSQTI. Pro residues predominate over residues 59–69; sequence RSTPPSDPTPS. 5 consecutive C2H2-type zinc fingers follow at residues 103–125, 133–155, 161–183, 190–215, and 223–246; these read HVCP…LEAH, YQCD…RMRH, YECR…SMTH, FDCP…EETH, and ASCK…QTRH. 3 disordered regions span residues 243 to 275, 290 to 311, and 376 to 417; these read QTRH…MDPA, EFSP…DKIP, and TSSS…KEDE. Basic and acidic residues predominate over residues 244–259; that stretch reads TRHDDSESSPKKENTP. Low complexity-rich tracts occupy residues 292–305 and 376–403; these read SPPN…STSS and TSSS…SLSL. Residues 404–413 show a composition bias toward basic and acidic residues; it reads TEKEKSPTPE. 2 C2H2-type zinc fingers span residues 420 to 442 and 448 to 472; these read VECC…KSLH and FKCA…FADH.

It belongs to the Ikaros C2H2-type zinc-finger protein family. In terms of tissue distribution, expressed in the somatic gonad, hypodermis and cells in the head and tail. Expressed in amphid and phasmid sheath glia, amphid and phasmid socket glia, and in neurons in the head.

The protein localises to the nucleus. Functionally, positively regulates the expression of ver-1 in the amphid sheath glia of amphid sensory neurons. Together with ehn-3, plays a role in somatic gonad development and is required for proper gonadal primordium assembly and somatic gonad precursor cell morphology. In Caenorhabditis elegans, this protein is Zinc finger protein ztf-16.